Consider the following 388-residue polypeptide: Alanine racemase (388 aa).

Catalysis depends on lysine 44, which acts as the Proton acceptor; specific for D-alanine. An N6-(pyridoxal phosphate)lysine modification is found at lysine 44. A substrate-binding site is contributed by arginine 142. Catalysis depends on tyrosine 273, which acts as the Proton acceptor; specific for L-alanine. Substrate is bound at residue methionine 321.

It belongs to the alanine racemase family. Pyridoxal 5'-phosphate is required as a cofactor.

It carries out the reaction L-alanine = D-alanine. The protein operates within amino-acid biosynthesis; D-alanine biosynthesis; D-alanine from L-alanine: step 1/1. In terms of biological role, catalyzes the interconversion of L-alanine and D-alanine. May also act on other amino acids. This chain is Alanine racemase (alr), found in Mycobacterium ulcerans (strain Agy99).